The following is a 388-amino-acid chain: Probable E3 ubiquitin-protein ligase LOG2 (388 aa).

The segment at 1-43 (MGNISSSGGEGRRRRRRNHTAAPPPPPPPPSSSLPPPPLPTEI) is disordered. Glycine 2 carries the N-myristoyl glycine lipid modification. A compositionally biased stretch (pro residues) spans 22–40 (APPPPPPPPSSSLPPPPLP). Residues 159–281 (FTFDATVSGR…GEIKIRVVKQ (123 aa)) form a DAR2 domain region. An RING-type; atypical zinc finger spans residues 319–358 (CVICLSEPRDTTVLPCRHMCMCSGCAKVLRFQTNRCPICR). The interval 368-388 (KVHGNNGSGNNTGQGETVEQE) is disordered.

The protein belongs to the RING-type zinc finger family. LOG2 subfamily. As to quaternary structure, interacts with GDU1. Myristoylated (in vitro). Expressed in the vascular tissues in both phloem and xylem parenchyma cells.

The protein localises to the cell membrane. It catalyses the reaction S-ubiquitinyl-[E2 ubiquitin-conjugating enzyme]-L-cysteine + [acceptor protein]-L-lysine = [E2 ubiquitin-conjugating enzyme]-L-cysteine + N(6)-ubiquitinyl-[acceptor protein]-L-lysine.. It participates in protein modification; protein ubiquitination. Functionally, acts as an E3 ubiquitin-protein ligase, or as part of E3 complex, which accepts ubiquitin from specific E2 ubiquitin-conjugating enzymes and then transfers it to substrates (in vitro). Required for GLUTAMINE DUMPER 1(GDU1)-induced amino acid secretion and for amino acid homeostasis. Ubiquitinates GDU1 (in vitro). The sequence is that of Probable E3 ubiquitin-protein ligase LOG2 (LOG2) from Arabidopsis thaliana (Mouse-ear cress).